Here is an 86-residue protein sequence, read N- to C-terminus: Small ribosomal subunit protein bS20 (86 aa).

The span at 1–27 (MANIKSAKKRAVQSEKRRQHNASRRSM) shows a compositional bias: basic residues. The interval 1–28 (MANIKSAKKRAVQSEKRRQHNASRRSMM) is disordered.

Belongs to the bacterial ribosomal protein bS20 family.

Binds directly to 16S ribosomal RNA. The chain is Small ribosomal subunit protein bS20 from Proteus mirabilis (strain HI4320).